Here is a 124-residue protein sequence, read N- to C-terminus: Transmembrane protein 254 (124 aa).

Transmembrane regions (helical) follow at residues 16–36 (LFWV…IFWP), 62–82 (VHAW…YAIV), and 96–116 (LLWF…LIAF).

The protein resides in the membrane. The sequence is that of Transmembrane protein 254 (TMEM254) from Bos taurus (Bovine).